Consider the following 327-residue polypeptide: Endochitinase CH5B (327 aa).

The N-terminal stretch at 1-26 (MKKNRMMIMICSVGVVWMLLVGGSYG) is a signal peptide. Positions 27–67 (EQCGRQAGGALCPGGNCCSQFGWCGSTTDYCGKDCQSQCGG) constitute a Chitin-binding type-1 domain. Cystine bridges form between Cys-29/Cys-44, Cys-38/Cys-50, Cys-43/Cys-57, Cys-61/Cys-65, Cys-96/Cys-158, Cys-169/Cys-177, and Cys-276/Cys-308. The Proton donor role is filled by Glu-140. The propeptide at 317-327 (SLFLSDLVTSQ) is removed in mature form.

Belongs to the glycosyl hydrolase 19 family. Chitinase class I subfamily.

It localises to the vacuole. The enzyme catalyses Random endo-hydrolysis of N-acetyl-beta-D-glucosaminide (1-&gt;4)-beta-linkages in chitin and chitodextrins.. In terms of biological role, defense against chitin-containing fungal pathogens. In Phaseolus vulgaris (Kidney bean), this protein is Endochitinase CH5B.